The chain runs to 301 residues: Ubiquitin thioesterase OTU1 (301 aa).

The interval 5–83 is UBX-like; that stretch reads RCKAKNGTHL…IVEEEKNKPK (79 aa). The region spanning 102-227 is the OTU domain; the sequence is VERRVVPADN…GIHYDPLQKV (126 aa). A cys-loop region spans residues 107-113; it reads VPADNSC. D110 is a catalytic residue. The Nucleophile role is filled by C113. The segment at 166–176 is variable-loop; sequence IRRDDTWGGAI. The tract at residues 216–220 is his-loop; it reads YDGIH. Residue I219 coordinates substrate. Residue H220 is part of the active site. The interval 244–249 is S2 site; sequence DVILAQ. The C2H2-type zinc finger occupies 271 to 295; that stretch reads LRCMVCQTGLVGQKEAREHAKETGH. H295 is an active-site residue.

The protein localises to the cytoplasm. The catalysed reaction is Thiol-dependent hydrolysis of ester, thioester, amide, peptide and isopeptide bonds formed by the C-terminal Gly of ubiquitin (a 76-residue protein attached to proteins as an intracellular targeting signal).. Hydrolase that can remove conjugated ubiquitin from proteins and participates in endoplasmic reticulum-associated degradation (ERAD) for misfolded lumenal proteins. May act by triming the ubiquitin chain on the associated substrate to facilitate their threading through the VCP/p97 pore. Ubiquitin moieties on substrates may present a steric impediment to the threading process when the substrate is transferred to the VCP pore and threaded through VCP's axial channel. Mediates deubiquitination of 'Lys-27'-, 'Lys-29'- and 'Lys-33'-linked polyubiquitin chains. Also able to hydrolyze 'Lys-11'-linked ubiquitin chains. Cleaves both polyubiquitin and di-ubiquitin. The sequence is that of Ubiquitin thioesterase OTU1 (yod1) from Danio rerio (Zebrafish).